Consider the following 368-residue polypeptide: POU domain, class 3, transcription factor 1 (368 aa).

A compositionally biased stretch (polar residues) spans 1-16; that stretch reads MATTAQYIPRNNSLPS. Disordered regions lie at residues 1 to 28, 69 to 88, 100 to 134, and 147 to 193; these read MATT…DRMH, TDWT…ASVQ, SHLV…NGHQ, and SPQP…PSSD. Positions 79–88 are enriched in basic and acidic residues; that stretch reads QAEHNKASVQ. Positions 105-134 are enriched in polar residues; the sequence is QPTQNSHHGSWAPTTTHHLSPLSPASNGHQ. Basic and acidic residues predominate over residues 155-170; that stretch reads GLRDPLHDDAGSHDNQ. Positions 187–261 constitute a POU-specific domain; that stretch reads EDAPSSDDLE…LLNKWLEETD (75 aa). Positions 279 to 338 form a DNA-binding region, homeobox; that stretch reads KRKKRTSIEVGVKGALENHFLKCPKPSAHEITTLAGTLQLEKEVVRVWFCNRRQKEKRMT.

Belongs to the POU transcription factor family. Class-3 subfamily. As to expression, predominantly expressed in the embryonic and adult central nervous system.

The protein resides in the nucleus. Its function is as follows. Transcription factor that may play important roles in patterning the embryonic brain. Could directly respond to the reception of the sonic hedgehog (shh) signal. The protein is POU domain, class 3, transcription factor 1 (pou3f1) of Danio rerio (Zebrafish).